We begin with the raw amino-acid sequence, 1183 residues long: DNA-directed RNA polymerase subunit beta (1183 aa).

Over residues 1149–1162 the composition is skewed to acidic residues; sequence DNEIEMADVDDEDA. The tract at residues 1149 to 1183 is disordered; sequence DNEIEMADVDDEDATERKVDLQQKDVPETQKETTD. Positions 1163 to 1183 are enriched in basic and acidic residues; the sequence is TERKVDLQQKDVPETQKETTD.

The protein belongs to the RNA polymerase beta chain family. In terms of assembly, the RNAP catalytic core consists of 2 alpha, 1 beta, 1 beta' and 1 omega subunit. When a sigma factor is associated with the core the holoenzyme is formed, which can initiate transcription.

It catalyses the reaction RNA(n) + a ribonucleoside 5'-triphosphate = RNA(n+1) + diphosphate. DNA-dependent RNA polymerase catalyzes the transcription of DNA into RNA using the four ribonucleoside triphosphates as substrates. The sequence is that of DNA-directed RNA polymerase subunit beta from Staphylococcus haemolyticus (strain JCSC1435).